We begin with the raw amino-acid sequence, 950 residues long: RNA polymerase-associated protein RapA (950 aa).

One can recognise a Helicase ATP-binding domain in the interval 165 to 333 (EVADRMAPRV…FARLRLLDPN (169 aa)). An ATP-binding site is contributed by 178–185 (DEVGLGKT). Positions 279-282 (DEAH) match the DEAH box motif. One can recognise a Helicase C-terminal domain in the interval 475–629 (RVEWLIDTLK…TCPTGNALQH (155 aa)).

Belongs to the SNF2/RAD54 helicase family. RapA subfamily. In terms of assembly, interacts with the RNAP. Has a higher affinity for the core RNAP than for the holoenzyme. Its ATPase activity is stimulated by binding to RNAP.

Functionally, transcription regulator that activates transcription by stimulating RNA polymerase (RNAP) recycling in case of stress conditions such as supercoiled DNA or high salt concentrations. Probably acts by releasing the RNAP, when it is trapped or immobilized on tightly supercoiled DNA. Does not activate transcription on linear DNA. Probably not involved in DNA repair. This chain is RNA polymerase-associated protein RapA, found in Pseudomonas aeruginosa (strain LESB58).